The primary structure comprises 354 residues: MRNLLDLSQDELANLLSPKFRAKQIYEWVYKKNARSFDEMTNISKDVRENLKSEFYLDPLTCVRSETSKDGSIKYLFKLTDGKTIESVLLPMKEEISSEDGSVERHARYTICVSSQVGCKMGCSFCLTAKGGFVRNLSAGEIVAQILWIKRENNIPYERRVNVVYMGMGEPLDNLTNVSKAVSILKDNDGLAIGARRQTISTSGLASQIKKLGELDLGVLLAISLHAVTDELRAKLMPINKAYNIAAVMDAVRAFPIDMRKRVMFEYLIMDKVNDNLSDAKALVKLLHGIKAKVNLILFNPHEGSQYQRPSIENVDNFRTYLQSRGVTCTIRQSKGLDISAACGQLKERSKVEM.

Catalysis depends on Glu-86, which acts as the Proton acceptor. In terms of domain architecture, Radical SAM core spans Arg-105–Asp-338. Cys-112 and Cys-343 form a disulfide bridge. 3 residues coordinate [4Fe-4S] cluster: Cys-119, Cys-123, and Cys-126. S-adenosyl-L-methionine is bound by residues Gly-169 to Glu-170, Ser-201, Ser-224 to His-226, and Asn-300. Cys-343 acts as the S-methylcysteine intermediate in catalysis.

This sequence belongs to the radical SAM superfamily. RlmN family. The cofactor is [4Fe-4S] cluster.

The protein resides in the cytoplasm. The enzyme catalyses adenosine(2503) in 23S rRNA + 2 reduced [2Fe-2S]-[ferredoxin] + 2 S-adenosyl-L-methionine = 2-methyladenosine(2503) in 23S rRNA + 5'-deoxyadenosine + L-methionine + 2 oxidized [2Fe-2S]-[ferredoxin] + S-adenosyl-L-homocysteine. It catalyses the reaction adenosine(37) in tRNA + 2 reduced [2Fe-2S]-[ferredoxin] + 2 S-adenosyl-L-methionine = 2-methyladenosine(37) in tRNA + 5'-deoxyadenosine + L-methionine + 2 oxidized [2Fe-2S]-[ferredoxin] + S-adenosyl-L-homocysteine. Functionally, specifically methylates position 2 of adenine 2503 in 23S rRNA and position 2 of adenine 37 in tRNAs. m2A2503 modification seems to play a crucial role in the proofreading step occurring at the peptidyl transferase center and thus would serve to optimize ribosomal fidelity. This is Dual-specificity RNA methyltransferase RlmN from Campylobacter fetus subsp. fetus (strain 82-40).